Reading from the N-terminus, the 235-residue chain is Germin-like protein 1-4 (235 aa).

Residues Met-1–Ala-27 form the signal peptide. Cys-37 and Cys-55 form a disulfide bridge. Asn-60 carries N-linked (GlcNAc...) asparagine glycosylation. The 158-residue stretch at Pro-69 to Glu-226 folds into the Cupin type-1 domain. The Mn(2+) site is built by His-120, His-122, Glu-127, and His-171.

It belongs to the germin family. Oligomer (believed to be a pentamer but probably hexamer).

It is found in the secreted. It localises to the extracellular space. The protein resides in the apoplast. In terms of biological role, may play a role in plant defense. Probably has no oxalate oxidase activity even if the active site is conserved. The chain is Germin-like protein 1-4 from Oryza sativa subsp. japonica (Rice).